The primary structure comprises 287 residues: Urease accessory protein UreD (287 aa).

It belongs to the UreD family. UreD, UreF and UreG form a complex that acts as a GTP-hydrolysis-dependent molecular chaperone, activating the urease apoprotein by helping to assemble the nickel containing metallocenter of UreC. The UreE protein probably delivers the nickel.

It localises to the cytoplasm. Required for maturation of urease via the functional incorporation of the urease nickel metallocenter. The protein is Urease accessory protein UreD of Herpetosiphon aurantiacus (strain ATCC 23779 / DSM 785 / 114-95).